The following is a 311-amino-acid chain: Phosphoribosylaminoimidazole-succinocarboxamide synthase (311 aa).

The protein belongs to the SAICAR synthetase family.

It catalyses the reaction 5-amino-1-(5-phospho-D-ribosyl)imidazole-4-carboxylate + L-aspartate + ATP = (2S)-2-[5-amino-1-(5-phospho-beta-D-ribosyl)imidazole-4-carboxamido]succinate + ADP + phosphate + 2 H(+). The protein operates within purine metabolism; IMP biosynthesis via de novo pathway; 5-amino-1-(5-phospho-D-ribosyl)imidazole-4-carboxamide from 5-amino-1-(5-phospho-D-ribosyl)imidazole-4-carboxylate: step 1/2. The chain is Phosphoribosylaminoimidazole-succinocarboxamide synthase from Aromatoleum aromaticum (strain DSM 19018 / LMG 30748 / EbN1) (Azoarcus sp. (strain EbN1)).